The following is a 427-amino-acid chain: Tol-Pal system protein TolB (427 aa).

Positions methionine 1–alanine 23 are cleaved as a signal peptide.

This sequence belongs to the TolB family. The Tol-Pal system is composed of five core proteins: the inner membrane proteins TolA, TolQ and TolR, the periplasmic protein TolB and the outer membrane protein Pal. They form a network linking the inner and outer membranes and the peptidoglycan layer.

The protein localises to the periplasm. In terms of biological role, part of the Tol-Pal system, which plays a role in outer membrane invagination during cell division and is important for maintaining outer membrane integrity. This Haemophilus influenzae (strain PittEE) protein is Tol-Pal system protein TolB.